Here is a 556-residue protein sequence, read N- to C-terminus: General transcription factor IIF subunit 1 (556 aa).

Disordered stretches follow at residues Thr-82–Ala-128 and Ser-226–Glu-499. Positions Thr-84 to Ala-128 are enriched in low complexity. Residues Ser-245 to Lys-275 show a composition bias toward basic and acidic residues. 2 stretches are compositionally biased toward acidic residues: residues Gly-291–Leu-338 and Gly-378–Asp-394. 2 stretches are compositionally biased toward basic and acidic residues: residues Val-415–Ser-427 and Asn-450–Ser-461. Residues Ser-469–Pro-492 are compositionally biased toward low complexity.

The protein belongs to the TFIIF alpha subunit family. In terms of assembly, heterodimer of an alpha and a beta subunit.

It localises to the nucleus. Its function is as follows. TFIIF is a general transcription initiation factor that binds to RNA polymerase II and helps to recruit it to the initiation complex in collaboration with TFIIB. It promotes transcription elongation. The chain is General transcription factor IIF subunit 1 (gtf2f1) from Dictyostelium discoideum (Social amoeba).